A 448-amino-acid chain; its full sequence is tRNA(Ile)-lysidine synthase (448 aa).

Ser-25–Ser-30 serves as a coordination point for ATP.

This sequence belongs to the tRNA(Ile)-lysidine synthase family.

It localises to the cytoplasm. It carries out the reaction cytidine(34) in tRNA(Ile2) + L-lysine + ATP = lysidine(34) in tRNA(Ile2) + AMP + diphosphate + H(+). Ligates lysine onto the cytidine present at position 34 of the AUA codon-specific tRNA(Ile) that contains the anticodon CAU, in an ATP-dependent manner. Cytidine is converted to lysidine, thus changing the amino acid specificity of the tRNA from methionine to isoleucine. The sequence is that of tRNA(Ile)-lysidine synthase from Brucella suis biovar 1 (strain 1330).